The following is a 220-amino-acid chain: LHFPL tetraspan subfamily member 1 protein (220 aa).

The first 20 residues, 1 to 20 (MRSSLTMVGTLWAFLSLVTA), serve as a signal peptide directing secretion. The next 2 helical transmembrane spans lie at 86-106 (VVTGAGCALLLLVALAAVLGC) and 122-142 (AAQFVGGLLISSGCALYPLGW). Asn-153 carries an N-linked (GlcNAc...) asparagine glycan. Residues 165-185 (LGWAYYCAGGGAAAAMLICTW) traverse the membrane as a helical segment.

This sequence belongs to the LHFP family. In terms of tissue distribution, widely expressed. Expressed at high levels in lung, thymus, skeletal muscle, colon and ovary.

Its subcellular location is the membrane. This Homo sapiens (Human) protein is LHFPL tetraspan subfamily member 1 protein.